The chain runs to 1607 residues: Phosphatidylinositol 3-kinase piki-1 (1607 aa).

The 20-residue stretch at 2 to 21 (SDDEELQLAIEISKKTFKDE) folds into the UIM domain. 3 disordered regions span residues 54-91 (EANS…HSQS), 105-128 (STSQ…KFPP), and 142-182 (PPPP…SFAS). Over residues 58-69 (PGPSSYSGSLAT) the composition is skewed to polar residues. The span at 158 to 169 (PPVPIHPTPPVS) shows a compositional bias: pro residues. One can recognise a PI3K-RBD domain in the interval 362–453 (ASTVKVVVYK…GDDVKLDLGV (92 aa)). The 169-residue stretch at 598–766 (KMDFLQIMLN…KIWDTEIYFP (169 aa)) folds into the C2 PI3K-type domain. The 178-residue stretch at 776–953 (PQDFATLDIE…AIRCQNLQQK (178 aa)) folds into the PIK helical domain. A PI3K/PI4K catalytic domain is found at 1029 to 1303 (RIEECSVFNS…MIQNSLGSAF (275 aa)). Residues 1035–1041 (VFNSNAK) are G-loop. The segment at 1168–1176 (GIGDRHNDN) is catalytic loop. The tract at residues 1187 to 1213 (HIDFGKYMGDWQMAAGFRRDRVPFVFT) is activation loop. The PX domain occupies 1344 to 1458 (GRISRVTVLK…TFFHSILRDN (115 aa)). The C2 domain occupies 1472–1601 (SQCQIYLKIE…KNCRTLEGWF (130 aa)).

This sequence belongs to the PI3/PI4-kinase family.

The protein localises to the cell projection. Its subcellular location is the phagocytic cup. It localises to the cytoplasmic vesicle. The protein resides in the phagosome membrane. It is found in the cytoplasm. It catalyses the reaction a 1,2-diacyl-sn-glycero-3-phospho-(1D-myo-inositol) + ATP = a 1,2-diacyl-sn-glycero-3-phospho-(1D-myo-inositol-3-phosphate) + ADP + H(+). Its function is as follows. Phosphatidylinositol 3-kinase involved in clearance of apoptotic cell corpses by phagosomes. Phagosome maturation requires two sequential and non-overlapping pulses of phosphatidylinositol-3-phosphate (PI3P) on the vesicle surface which mediates recruitment of sortins snx-1 and lst-4 and small GTPases rab-5, rab-2 and rab-7. The first pulse is initiated by piki-1, then maintained by vps-34 which also produces the second pulse. Unlike vps-34, not involved in the formation of PI3P in early endosomes. The sequence is that of Phosphatidylinositol 3-kinase piki-1 from Caenorhabditis elegans.